We begin with the raw amino-acid sequence, 284 residues long: Bifunctional protein FolD 2 (284 aa).

Residues 164-166, S189, and I230 contribute to the NADP(+) site; that span reads GRG.

The protein belongs to the tetrahydrofolate dehydrogenase/cyclohydrolase family. Homodimer.

The enzyme catalyses (6R)-5,10-methylene-5,6,7,8-tetrahydrofolate + NADP(+) = (6R)-5,10-methenyltetrahydrofolate + NADPH. The catalysed reaction is (6R)-5,10-methenyltetrahydrofolate + H2O = (6R)-10-formyltetrahydrofolate + H(+). The protein operates within one-carbon metabolism; tetrahydrofolate interconversion. In terms of biological role, catalyzes the oxidation of 5,10-methylenetetrahydrofolate to 5,10-methenyltetrahydrofolate and then the hydrolysis of 5,10-methenyltetrahydrofolate to 10-formyltetrahydrofolate. The protein is Bifunctional protein FolD 2 of Desulfitobacterium hafniense (strain Y51).